The chain runs to 478 residues: Zinc finger protein 410 (478 aa).

Residues 187 to 213 form a disordered region; that stretch reads NAKTSSNGENVHLGSGDGQSKDSGPLP. C2H2-type zinc fingers lie at residues 219-243, 249-273, 279-303, 309-333, and 339-362; these read LKCT…LKTH, FICP…MRTH, FMCH…RRIH, FLCE…LVVH, and HQCQ…RKHH. Zn(2+) is bound by residues cysteine 221, cysteine 226, histidine 239, histidine 243, cysteine 251, cysteine 256, histidine 269, histidine 273, cysteine 281, cysteine 286, histidine 299, histidine 303, cysteine 311, cysteine 316, histidine 329, histidine 333, cysteine 341, cysteine 344, histidine 357, and histidine 361.

As to quaternary structure, interacts with CDKN2A/p14ARF. Post-translationally, sumoylated. Sumoylation increases its half-life, possibly by blocking ubiquitin-mediated degradation. In terms of processing, O-glycosylated. O-GlcNAcylation may occur in response to increasing glucose levels and affect transcription factor activity. Widely expressed.

It is found in the nucleus. The protein localises to the chromosome. Functionally, transcription factor that binds to the sequence motif 5'-CATCCCATAATA-3', and is specifically required to silence expression of fetal hemoglobin in adult erythroid cells. Prevents expression of fetal hemoglobin genes HBG1 and HBG2 through CHD4: acts as a direct transcriptional activator of CHD4, a central component of the NuRD complex that represses transcription of fetal hemoglobin genes HBG1 and HBG2 in erythroid cells. May also activate transcription of matrix-remodeling genes such as MMP1 during fibroblast senescence. May activate transcription of the gap junction gene GJC1, perhaps in response to increasing glucose. However, recent studies suggest that ZNF410 is dedicated to regulate expression of a single gene: CHD4. This Homo sapiens (Human) protein is Zinc finger protein 410.